The following is a 234-amino-acid chain: MGKKIAKRLQTLQAKVEPQKVYSIQSGVSAVKSLASAKFDETVEVALRLGVDPRHADQMIRGAVVLPHGTGKKVRVAVFAKGIKADEAKNAGADVVGADDLAEEIKNGNINFDMVIATPDMMALVGKVGRILGPKGLMPNPKTGTVTIDVAKAVANAKSGQVNFRVDKKGIIHAPIGKASFNEEKILDNMLELVRAINRLKPTSAKGKYIRSSSLSLTMSPAIKLDSQELMDMK.

It belongs to the universal ribosomal protein uL1 family. As to quaternary structure, part of the 50S ribosomal subunit.

Functionally, binds directly to 23S rRNA. The L1 stalk is quite mobile in the ribosome, and is involved in E site tRNA release. In terms of biological role, protein L1 is also a translational repressor protein, it controls the translation of the L11 operon by binding to its mRNA. This Helicobacter hepaticus (strain ATCC 51449 / 3B1) protein is Large ribosomal subunit protein uL1.